The primary structure comprises 91 residues: C-C motif chemokine 5 (91 aa).

Residues 1–23 (MKVSAAALCVILTTAALCVPASA) form the signal peptide. Intrachain disulfides connect Cys33–Cys57 and Cys34–Cys73.

Belongs to the intercrine beta (chemokine CC) family.

It is found in the secreted. In terms of biological role, chemoattractant for blood monocytes, memory T-helper cells and eosinophils. Causes the release of histamine from basophils and activates eosinophils. May activate several chemokine receptors including CCR1, CCR3, CCR4 and CCR5. May also be an agonist of the G protein-coupled receptor GPR75. Together with GPR75, may play a role in neuron survival through activation of a downstream signaling pathway involving the PI3, Akt and MAP kinases. By activating GPR75 may also play a role in insulin secretion by islet cells. In Cavia porcellus (Guinea pig), this protein is C-C motif chemokine 5 (CCL5).